The following is a 339-amino-acid chain: Pleckstrin homology domain protein opy1 (339 aa).

Positions 25-119 constitute a PH 1 domain; that stretch reads RVLKSGWLIK…WVHVLRSTTG (95 aa). Polar residues predominate over residues 141–167; that stretch reads ESEPNVQISDTDFDNISTEPRNQTTSP. The segment at 141–170 is disordered; that stretch reads ESEPNVQISDTDFDNISTEPRNQTTSPLDL. The PH 2 domain maps to 233-330; that stretch reads KVLMQGTIHW…WVAALKTSID (98 aa).

As to quaternary structure, interacts (via domain PH 1) with phosphatidylinositol 4-phosphate 5-kinase its3; the interaction is direct but opy1 does not appear to regulate its3 localization or function.

It is found in the cell tip. The protein localises to the cell membrane. Its function is as follows. Binds phosphatidylinositol 4,5-bisphosphate (PtdIns(4,5)P2/PIP2) at the cell membrane. This Schizosaccharomyces pombe (strain 972 / ATCC 24843) (Fission yeast) protein is Pleckstrin homology domain protein opy1.